The primary structure comprises 1713 residues: Serine/threonine-protein kinase MRCK beta (1713 aa).

Residues 76–342 enclose the Protein kinase domain; the sequence is FEIIKVIGRG…IEDFKKHAFF (267 aa). ATP contacts are provided by residues 82–90 and Lys-105; that span reads IGRGAFGEV. Asp-200 functions as the Proton acceptor in the catalytic mechanism. Ser-221 and Ser-233 each carry phosphoserine; by autocatalysis. Phosphothreonine; by autocatalysis is present on Thr-239. The 71-residue stretch at 343–413 folds into the AGC-kinase C-terminal domain; that stretch reads EGLNWENIRN…TTESCFSDRG (71 aa). A Phosphothreonine modification is found at Thr-423. Residues 434 to 649 adopt a coiled-coil conformation; it reads LENSLQIEAY…ASKERKLREH (216 aa). Position 671 is an omega-N-methylarginine (Arg-671). 2 coiled-coil regions span residues 681–815 and 878–939; these read QEIS…AHWE and ELQS…FRAD. Ser-927 is modified (phosphoserine). The residue at position 954 (Tyr-954) is a Phosphotyrosine. A compositionally biased stretch (polar residues) spans 971 to 994; sequence ASDQETQASKMDLSPSVSVATSTE. The interval 971–1022 is disordered; that stretch reads ASDQETQASKMDLSPSVSVATSTEQQEDMARPQQRPSPVPLPSTQALAMAGP. The Phorbol-ester/DAG-type zinc-finger motif lies at 1026-1076; the sequence is AHQFSIKSFPSPTQCSHCTSLMVGLIRQGYACEVCAFSCHVSCKDSAPQVC. The PH domain maps to 1096-1215; the sequence is GTAYKGYVKV…WVGILEGLQA (120 aa). Residues 1241–1515 form the CNH domain; sequence IKAVLAAAIV…RPLNSDGSLN (275 aa). Residues 1585 to 1598 enclose the CRIB domain; that stretch reads ISNPTNFNHVAHMG. Residues 1616–1713 are disordered; sequence TVQEEKQGPT…EGLDQPSCDA (98 aa). Positions 1666 to 1677 are enriched in basic and acidic residues; sequence DFDKEPDSDSTK. 5 positions are modified to phosphoserine: Ser-1682, Ser-1684, Ser-1688, Ser-1692, and Ser-1695.

The protein belongs to the protein kinase superfamily. AGC Ser/Thr protein kinase family. DMPK subfamily. In terms of assembly, homodimer and homotetramer via the coiled coil regions. Interacts tightly with GTP-bound but not GDP-bound CDC42. Interacts with TJP1; this interaction requires the presence of catalytically active CDC42. Forms a tripartite complex with MYO18A and LURAP1 with the latter acting as an adapter connecting CDC42BPB and MYO18A. LURAP1 binding results in activation of CDC42BPB by abolition of its negative autoregulation. Interacts with STRIP1, STRN3 and SIKE1. Interacts with CPNE4 (via VWFA domain). Interacts with LURAP1. Interacts (via AGC-kinase C-terminal domain) with FAM89B/LRAP25 (via LRR repeat). Forms a tripartite complex with FAM89B/LRAP25 and LIMK1. Mg(2+) serves as cofactor. Proteolytically cleaved by caspases upon apoptosis induction.

It localises to the cytoplasm. It is found in the cell membrane. Its subcellular location is the cell junction. The protein resides in the cell projection. The protein localises to the lamellipodium. The enzyme catalyses L-seryl-[protein] + ATP = O-phospho-L-seryl-[protein] + ADP + H(+). It catalyses the reaction L-threonyl-[protein] + ATP = O-phospho-L-threonyl-[protein] + ADP + H(+). Its activity is regulated as follows. Maintained in an inactive, closed conformation by an interaction between the kinase domain and the negative autoregulatory C-terminal coiled-coil region. Agonist binding to the phorbol ester binding site disrupts this, releasing the kinase domain to allow N-terminus-mediated dimerization and kinase activation by transautophosphorylation. Inhibited by chelerythrine chloride. In terms of biological role, serine/threonine-protein kinase which is an important downstream effector of CDC42 and plays a role in the regulation of cytoskeleton reorganization and cell migration. Regulates actin cytoskeletal reorganization via phosphorylation of PPP1R12C and MYL9/MLC2. In concert with MYO18A and LURAP1, is involved in modulating lamellar actomyosin retrograde flow that is crucial to cell protrusion and migration. Phosphorylates PPP1R12A. In concert with FAM89B/LRAP25 mediates the targeting of LIMK1 to the lamellipodium resulting in its activation and subsequent phosphorylation of CFL1 which is important for lamellipodial F-actin regulation. This chain is Serine/threonine-protein kinase MRCK beta, found in Mus musculus (Mouse).